The chain runs to 502 residues: NAD(P)H-quinone oxidoreductase chain 4, chloroplastic (502 aa).

The next 14 helical transmembrane spans lie at 4–24, 37–57, 87–107, 113–130, 134–154, 167–187, 208–228, 242–262, 272–292, 305–325, 330–350, 374–396, 416–436, and 464–484; these read FPWL…IFFF, ICIC…HFQL, VGPI…AWPV, LFHF…GLFS, LLLF…LLSM, FILY…GMGL, ALEI…LPII, HYST…YGLV, AHSI…IYAA, IAYS…SITD, GAIL…FLAG, IFTM…GFAA, ILIT…SLSM, and LFVS…PDFV.

It belongs to the complex I subunit 4 family.

It localises to the plastid. Its subcellular location is the chloroplast thylakoid membrane. It carries out the reaction a plastoquinone + NADH + (n+1) H(+)(in) = a plastoquinol + NAD(+) + n H(+)(out). The enzyme catalyses a plastoquinone + NADPH + (n+1) H(+)(in) = a plastoquinol + NADP(+) + n H(+)(out). The protein is NAD(P)H-quinone oxidoreductase chain 4, chloroplastic of Ranunculus macranthus (Large buttercup).